The following is a 254-amino-acid chain: Protein Thf1 (254 aa).

Positions 182–241 form a coiled coil; the sequence is EEKMKKDLDLYRSNLEKMNQVLEVLEDALAVERQRREKAEAEAKAKTAEATVATETNDEQ. The span at 215–228 shows a compositional bias: basic and acidic residues; the sequence is QRREKAEAEAKAKT. A disordered region spans residues 215–254; sequence QRREKAEAEAKAKTAEATVATETNDEQDEQKETSESGSDA.

The protein belongs to the THF1 family.

Its function is as follows. May be involved in photosynthetic membrane biogenesis. This Picosynechococcus sp. (strain ATCC 27264 / PCC 7002 / PR-6) (Agmenellum quadruplicatum) protein is Protein Thf1.